The following is a 255-amino-acid chain: Protein SCO2 homolog, mitochondrial (255 aa).

A mitochondrion-targeting transit peptide spans 1-41 (MLLALGPKAWPKLSQFKPLLRISGGETLHRNSRHWAGQGQR). Residues 42 to 49 (QGPGLRTR) lie on the Mitochondrial matrix side of the membrane. A helical membrane pass occupies residues 50 to 67 (LLITALFGAGLGWAWLAA). At 68–255 (RAEKEQWRQQ…HIAAFHSVLP (188 aa)) the chain is on the mitochondrial intermembrane side. Residues 74–248 (WRQQQRTEAL…IVESIRRHIA (175 aa)) enclose the Thioredoxin domain. 3 residues coordinate Cu cation: Cys-122, Cys-126, and His-213. Residues Cys-122 and Cys-126 are joined by a disulfide bond.

The protein belongs to the SCO1/2 family. As to quaternary structure, homodimer. Interacts with COA6. Found in a complex with TMEM177, COX20, COA6, MT-CO2/COX2, COX18 and SCO1. Interacts with TMEM177 in a COX20-dependent manner. Interacts with COX20 in a MT-CO2/COX2- and COX18-dependent manner. Interacts with COX16. Expressed in retina, retinal pigment epithelium, and sclera.

The protein resides in the mitochondrion inner membrane. Copper metallochaperone essential for the synthesis and maturation of cytochrome c oxidase subunit II (MT-CO2/COX2) by facilitating the incorporation of copper into the Cu(A) site of MT-CO2/COX2. Could also act as a thiol-disulfide oxidoreductase to regulate the redox state of the cysteines in SCO1 during maturation of MT-CO2/COX2. The sequence is that of Protein SCO2 homolog, mitochondrial (Sco2) from Mus musculus (Mouse).